The sequence spans 442 residues: tRNA modification GTPase MnmE (442 aa).

Residues R27, E84, and K124 each contribute to the (6S)-5-formyl-5,6,7,8-tetrahydrofolate site. The region spanning 221 to 366 is the TrmE-type G domain; the sequence is GLHVVIVGAP…LLTNLQNFAE (146 aa). GTP-binding positions include 231–236, 250–256, and 275–278; these read NAGKSS, SEEAGTT, and DTAG. Residues S235 and T256 each coordinate Mg(2+). K442 is a binding site for (6S)-5-formyl-5,6,7,8-tetrahydrofolate.

It belongs to the TRAFAC class TrmE-Era-EngA-EngB-Septin-like GTPase superfamily. TrmE GTPase family. Homodimer. Heterotetramer of two MnmE and two MnmG subunits. It depends on K(+) as a cofactor.

It is found in the cytoplasm. Its function is as follows. Exhibits a very high intrinsic GTPase hydrolysis rate. Involved in the addition of a carboxymethylaminomethyl (cmnm) group at the wobble position (U34) of certain tRNAs, forming tRNA-cmnm(5)s(2)U34. This Brucella anthropi (strain ATCC 49188 / DSM 6882 / CCUG 24695 / JCM 21032 / LMG 3331 / NBRC 15819 / NCTC 12168 / Alc 37) (Ochrobactrum anthropi) protein is tRNA modification GTPase MnmE.